We begin with the raw amino-acid sequence, 98 residues long: Trp operon repressor homolog (98 aa).

A DNA-binding region spans residues 59-82; the sequence is QRQVSQMLGVGVATITRGSNELKA.

The protein belongs to the TrpR family. As to quaternary structure, homodimer.

Its subcellular location is the cytoplasm. Its function is as follows. This protein is an aporepressor. When complexed with L-tryptophan it binds the operator region of the trp operon and prevents the initiation of transcription. The protein is Trp operon repressor homolog of Vibrio atlanticus (strain LGP32) (Vibrio splendidus (strain Mel32)).